The chain runs to 206 residues: Putative amino-acid transporter YggA (206 aa).

Transmembrane regions (helical) follow at residues 1-21, 37-57, 65-85, 116-136, 148-168, and 185-205; these read MFAT…PIGA, LLAA…GVFG, SPIG…WFGI, LGVT…LGSF, FAAG…FGAA, and TIVG…ALLA.

The protein belongs to the LysE/ArgO transporter (TC 2.A.75) family.

The protein resides in the cell membrane. The polypeptide is Putative amino-acid transporter YggA (yggA) (Aeromonas salmonicida).